Consider the following 92-residue polypeptide: Acylphosphatase (92 aa).

The Acylphosphatase-like domain occupies 5-92 (RAHVVVSGKV…GEFSGFKIAF (88 aa)). Residues Arg20 and Asn38 contribute to the active site.

It belongs to the acylphosphatase family.

It catalyses the reaction an acyl phosphate + H2O = a carboxylate + phosphate + H(+). The chain is Acylphosphatase (acyP) from Pelotomaculum thermopropionicum (strain DSM 13744 / JCM 10971 / SI).